A 168-amino-acid polypeptide reads, in one-letter code: DOMON domain-containing protein CBG21753 (168 aa).

A signal peptide spans 1–17 (MIKSMILVALILAFASA). Residues 25–143 (SGFQSYWRFA…CQKWRWIKSG (119 aa)) enclose the DOMON domain. Residues N35 and N94 are each glycosylated (N-linked (GlcNAc...) asparagine). Positions 148 to 168 (GQLTRNSKSPKDKKVCPMECN) are disordered. Basic and acidic residues predominate over residues 156–168 (SPKDKKVCPMECN).

It localises to the secreted. The sequence is that of DOMON domain-containing protein CBG21753 from Caenorhabditis briggsae.